Here is a 485-residue protein sequence, read N- to C-terminus: MDDSLGVSEVVMIPFMKREVLQQICAILDTDNTWETIAPYMPGIELRDVEGCKRYSSYNQSPSELLLRIWSSKGYSTTHLYQLFAKTKLIRLMRMMRSQVHEKYHYLENKVTNSTSRVSKQMVQPPGSQSASRLKKTEIKESSPSPAAAAASQLSRSNTDDTLRVAIEGTLPVTYCELLEATNGFAVSNVIGKGGYGTVYKGELKGTGGIVAVKRLHSGNDTSQNGSRERLRQSLTELRTLARFRHDNILPIYAYSLEGSEPCLVYQFMSNGSLEDRLLCRKGSVPLTWIQRKEISIGAGRGLGFLHSFGKTPIIHGDIKTANILLDKHMEPKIGDFGLCRDGHVEAEAMEKHPLIASHIKGTLAYLAPEFITSKILTTKLDVYSFGIVLLEIASGQRAYSDSRETRGLVEYCQVNKELAAHRKIPVREIFIDRRAPPLVGDEEKSFLDALIEVGLAGANNDRKVRPTMSQIVEYLCKNSIPPVV.

The span at 115 to 132 shows a compositional bias: polar residues; it reads TSRVSKQMVQPPGSQSAS. The interval 115–155 is disordered; it reads TSRVSKQMVQPPGSQSASRLKKTEIKESSPSPAAAAASQLS. Over residues 142–152 the composition is skewed to low complexity; sequence SSPSPAAAAAS. Residues 185-485 enclose the Protein kinase domain; the sequence is FAVSNVIGKG…LCKNSIPPVV (301 aa). ATP is bound by residues 191–199 and Lys-214; that span reads IGKGGYGTV. Residue Asp-318 is the Proton acceptor of the active site.

The protein belongs to the protein kinase superfamily. TKL Ser/Thr protein kinase family. Pelle subfamily. In terms of assembly, interacts with actl-1. In terms of tissue distribution, expressed in the nervous system.

It carries out the reaction L-seryl-[protein] + ATP = O-phospho-L-seryl-[protein] + ADP + H(+). It catalyses the reaction L-threonyl-[protein] + ATP = O-phospho-L-threonyl-[protein] + ADP + H(+). Its function is as follows. Through association with the adapter actl-1, may act downstream of the receptor complex composed of ilcr-1 and ilcr-2, which is a signaling complex that modulates neuronal activity and animal behavior in response to sensory neuron input. In Caenorhabditis elegans, this protein is Pelle-like serine/threonine-protein kinase pik-1.